We begin with the raw amino-acid sequence, 535 residues long: Peroxisomal membrane protein PEX29 (535 aa).

2 consecutive transmembrane segments (helical) span residues 139-159 (LSVP…SKPL) and 176-196 (ILLL…PAYM). An N-linked (GlcNAc...) asparagine glycan is attached at Asn239. The helical transmembrane segment at 247-267 (MLLYVMSYDFVTSLIVKYLYF) threads the bilayer. The N-linked (GlcNAc...) asparagine glycan is linked to Asn271. Transmembrane regions (helical) follow at residues 272-292 (ITIF…LFGA) and 297-317 (AMLP…TIAM). 2 N-linked (GlcNAc...) asparagine glycosylation sites follow: Asn450 and Asn515. A disordered region spans residues 511 to 535 (AHRRNKSMESSNSLHPVKSIDSVDG).

It belongs to the PEX28-32 family. PEX29 subfamily.

It localises to the endoplasmic reticulum membrane. Functionally, with PEX23, contributes to the formation of endoplasmic reticulum-mitochondria junctions which are important for mitochondrial function. Involved in lipid dropplets formation. The sequence is that of Peroxisomal membrane protein PEX29 from Ogataea parapolymorpha (strain ATCC 26012 / BCRC 20466 / JCM 22074 / NRRL Y-7560 / DL-1) (Yeast).